The primary structure comprises 284 residues: 2-dehydro-3-deoxyphosphooctonate aldolase (284 aa).

It belongs to the KdsA family.

The protein resides in the cytoplasm. The catalysed reaction is D-arabinose 5-phosphate + phosphoenolpyruvate + H2O = 3-deoxy-alpha-D-manno-2-octulosonate-8-phosphate + phosphate. The protein operates within carbohydrate biosynthesis; 3-deoxy-D-manno-octulosonate biosynthesis; 3-deoxy-D-manno-octulosonate from D-ribulose 5-phosphate: step 2/3. Its pathway is bacterial outer membrane biogenesis; lipopolysaccharide biosynthesis. This is 2-dehydro-3-deoxyphosphooctonate aldolase from Actinobacillus succinogenes (strain ATCC 55618 / DSM 22257 / CCUG 43843 / 130Z).